A 480-amino-acid polypeptide reads, in one-letter code: Protein nucleotidyltransferase YdiU (480 aa).

The ATP site is built by G86, G88, R89, K109, D121, G122, R172, and R179. The active-site Proton acceptor is D248. Mg(2+) contacts are provided by N249 and D258. Residue D258 coordinates ATP.

This sequence belongs to the SELO family. Requires Mg(2+) as cofactor. It depends on Mn(2+) as a cofactor.

The enzyme catalyses L-seryl-[protein] + ATP = 3-O-(5'-adenylyl)-L-seryl-[protein] + diphosphate. It carries out the reaction L-threonyl-[protein] + ATP = 3-O-(5'-adenylyl)-L-threonyl-[protein] + diphosphate. It catalyses the reaction L-tyrosyl-[protein] + ATP = O-(5'-adenylyl)-L-tyrosyl-[protein] + diphosphate. The catalysed reaction is L-histidyl-[protein] + UTP = N(tele)-(5'-uridylyl)-L-histidyl-[protein] + diphosphate. The enzyme catalyses L-seryl-[protein] + UTP = O-(5'-uridylyl)-L-seryl-[protein] + diphosphate. It carries out the reaction L-tyrosyl-[protein] + UTP = O-(5'-uridylyl)-L-tyrosyl-[protein] + diphosphate. Nucleotidyltransferase involved in the post-translational modification of proteins. It can catalyze the addition of adenosine monophosphate (AMP) or uridine monophosphate (UMP) to a protein, resulting in modifications known as AMPylation and UMPylation. This chain is Protein nucleotidyltransferase YdiU, found in Salmonella paratyphi A (strain ATCC 9150 / SARB42).